A 1082-amino-acid chain; its full sequence is Integrator complex subunit 3 homolog (1082 aa).

3 disordered regions span residues 483 to 563 (PGPP…VSDD), 923 to 945 (YPSNSPNKRKRPSKSAQQNTAPT), and 1005 to 1082 (DETS…SDSD). Composition is skewed to low complexity over residues 517 to 528 (PAAKAASTAASA) and 542 to 555 (TKPATTTTTTTTTT). A compositionally biased stretch (polar residues) spans 936–945 (KSAQQNTAPT). 2 stretches are compositionally biased toward low complexity: residues 1008–1018 (STTVGRRGTSS) and 1033–1056 (EKAAAAAAAAHANNSKKAAEASAK).

The protein belongs to the Integrator subunit 3 family. In terms of assembly, belongs to the multiprotein complex Integrator. The core complex associates with protein phosphatase 2A subunits, to form the Integrator-PP2A (INTAC) complex.

The protein localises to the nucleus. It localises to the cytoplasm. In terms of biological role, component of the integrator complex, a multiprotein complex that terminates RNA polymerase II (Pol II) transcription in the promoter-proximal region of genes. The integrator complex provides a quality checkpoint during transcription elongation by driving premature transcription termination of transcripts that are unfavorably configured for transcriptional elongation: the complex terminates transcription by (1) catalyzing dephosphorylation of the C-terminal domain (CTD) of Pol II subunit Polr2A/Rbp1 and Spt5, and (2) degrading the exiting nascent RNA transcript via endonuclease activity. The integrator complex is also involved in the 3'-end processing of the U7 snRNA, and also the spliceosomal snRNAs U1, U2, U4 and U5. The chain is Integrator complex subunit 3 homolog from Anopheles gambiae (African malaria mosquito).